Reading from the N-terminus, the 204-residue chain is uncharacterized protein (204 aa).

A run of 6 helical transmembrane segments spans residues 19 to 39 (TANPAPLGLLGFGITTILLNL), 42 to 62 (AGLFPINSMILAMGFAYGGIA), 78 to 98 (GTVAFGSYGLFWWSLVLLLVI), 116 to 136 (PVAMASYLFMWGLFTLLMFIA), 143 to 163 (GIQVIFISLAVLFFLLTAGEI), and 167 to 187 (ALITAVAGYEGIFTGAAAMYV).

This sequence belongs to the acetate uptake transporter (AceTr) (TC 2.A.96) family.

The protein localises to the cell membrane. This is an uncharacterized protein from Methanothermobacter thermautotrophicus (strain ATCC 29096 / DSM 1053 / JCM 10044 / NBRC 100330 / Delta H) (Methanobacterium thermoautotrophicum).